The chain runs to 70 residues: Large ribosomal subunit protein bL31c (70 aa).

Belongs to the bacterial ribosomal protein bL31 family. Type A subfamily. In terms of assembly, part of the 50S ribosomal subunit.

The protein resides in the plastid. It localises to the chloroplast. Binds the 23S rRNA. This chain is Large ribosomal subunit protein bL31c, found in Emiliania huxleyi (Coccolithophore).